The primary structure comprises 207 residues: Holliday junction branch migration complex subunit RuvA (207 aa).

The interval 1 to 64 is domain I; it reads MISYIKGELA…EDECSLFGFL (64 aa). The tract at residues 65–143 is domain II; the sequence is TRDDLSMFKM…LDEVFESALS (79 aa). The flexible linker stretch occupies residues 144–155; that stretch reads KNKKADNNSNVS. Residues 156 to 207 are domain III; that stretch reads NVMMIRNDAVEALVSLGYSSKDALVAVKEVEDIENKDSETVLKEALKKLVKF.

It belongs to the RuvA family. Homotetramer. Forms an RuvA(8)-RuvB(12)-Holliday junction (HJ) complex. HJ DNA is sandwiched between 2 RuvA tetramers; dsDNA enters through RuvA and exits via RuvB. An RuvB hexamer assembles on each DNA strand where it exits the tetramer. Each RuvB hexamer is contacted by two RuvA subunits (via domain III) on 2 adjacent RuvB subunits; this complex drives branch migration. In the full resolvosome a probable DNA-RuvA(4)-RuvB(12)-RuvC(2) complex forms which resolves the HJ.

It localises to the cytoplasm. The RuvA-RuvB-RuvC complex processes Holliday junction (HJ) DNA during genetic recombination and DNA repair, while the RuvA-RuvB complex plays an important role in the rescue of blocked DNA replication forks via replication fork reversal (RFR). RuvA specifically binds to HJ cruciform DNA, conferring on it an open structure. The RuvB hexamer acts as an ATP-dependent pump, pulling dsDNA into and through the RuvAB complex. HJ branch migration allows RuvC to scan DNA until it finds its consensus sequence, where it cleaves and resolves the cruciform DNA. This chain is Holliday junction branch migration complex subunit RuvA, found in Lachnospira eligens (strain ATCC 27750 / DSM 3376 / VPI C15-48 / C15-B4) (Eubacterium eligens).